Reading from the N-terminus, the 293-residue chain is Putative phosphoenolpyruvate synthase regulatory protein (293 aa).

173 to 180 (GVSRCGKT) provides a ligand contact to ADP.

This sequence belongs to the pyruvate, phosphate/water dikinase regulatory protein family. PSRP subfamily.

It carries out the reaction [pyruvate, water dikinase] + ADP = [pyruvate, water dikinase]-phosphate + AMP + H(+). It catalyses the reaction [pyruvate, water dikinase]-phosphate + phosphate + H(+) = [pyruvate, water dikinase] + diphosphate. Functionally, bifunctional serine/threonine kinase and phosphorylase involved in the regulation of the phosphoenolpyruvate synthase (PEPS) by catalyzing its phosphorylation/dephosphorylation. This is Putative phosphoenolpyruvate synthase regulatory protein from Photorhabdus laumondii subsp. laumondii (strain DSM 15139 / CIP 105565 / TT01) (Photorhabdus luminescens subsp. laumondii).